A 390-amino-acid chain; its full sequence is Endonuclease 8-like 1 (390 aa).

The Schiff-base intermediate with DNA role is filled by P2. The active-site Proton donor is E3. Residue K54 is the Proton donor; for beta-elimination activity of the active site. N176 is a binding site for DNA. The tract at residues 278-390 is disordered; the sequence is TIWFQGDPGP…SLEPEGTSAS (113 aa). Over residues 291–301 the composition is skewed to basic residues; that stretch reads KGRKSRKKKSK. Positions 335–347 are enriched in polar residues; sequence TATQRPEGTSLQQ. DNA is bound at residue R339. R339 (proton donor; for delta-elimination activity) is an active-site residue.

It belongs to the FPG family. As to expression, ubiquitous.

It is found in the cytoplasm. It localises to the cytoskeleton. The protein localises to the microtubule organizing center. The protein resides in the centrosome. Its subcellular location is the nucleus. It is found in the chromosome. It catalyses the reaction 2'-deoxyribonucleotide-(2'-deoxyribose 5'-phosphate)-2'-deoxyribonucleotide-DNA = a 3'-end 2'-deoxyribonucleotide-(2,3-dehydro-2,3-deoxyribose 5'-phosphate)-DNA + a 5'-end 5'-phospho-2'-deoxyribonucleoside-DNA + H(+). Involved in base excision repair of DNA damaged by oxidation or by mutagenic agents. Acts as a DNA glycosylase that recognizes and removes damaged bases. Has a preference for oxidized pyrimidines, such as thymine glycol, formamidopyrimidine (Fapy) and 5-hydroxyuracil. Has marginal activity towards 8-oxoguanine. Has AP (apurinic/apyrimidinic) lyase activity and introduces nicks in the DNA strand. Cleaves the DNA backbone by beta-delta elimination to generate a single-strand break at the site of the removed base with both 3'- and 5'-phosphates. Has DNA glycosylase/lyase activity towards mismatched uracil and thymine, in particular in U:C and T:C mismatches. Specifically binds 5-hydroxymethylcytosine (5hmC), suggesting that it acts as a specific reader of 5hmC. The polypeptide is Endonuclease 8-like 1 (NEIL1) (Homo sapiens (Human)).